Consider the following 372-residue polypeptide: Peptide chain release factor 2 (372 aa).

Gln253 is modified (N5-methylglutamine).

The protein belongs to the prokaryotic/mitochondrial release factor family. Methylated by PrmC. Methylation increases the termination efficiency of RF2.

It localises to the cytoplasm. Functionally, peptide chain release factor 2 directs the termination of translation in response to the peptide chain termination codons UGA and UAA. The polypeptide is Peptide chain release factor 2 (Nocardia farcinica (strain IFM 10152)).